A 342-amino-acid chain; its full sequence is L-threonine 3-dehydrogenase (342 aa).

Position 38 (cysteine 38) interacts with Zn(2+). Catalysis depends on charge relay system residues threonine 40 and histidine 43. The Zn(2+) site is built by histidine 63, glutamate 64, cysteine 93, cysteine 96, cysteine 99, and cysteine 107. NAD(+)-binding positions include isoleucine 175, aspartate 195, arginine 200, leucine 262–isoleucine 264, and isoleucine 286–tyrosine 287.

This sequence belongs to the zinc-containing alcohol dehydrogenase family. Homotetramer. The cofactor is Zn(2+).

It is found in the cytoplasm. It carries out the reaction L-threonine + NAD(+) = (2S)-2-amino-3-oxobutanoate + NADH + H(+). Its pathway is amino-acid degradation; L-threonine degradation via oxydo-reductase pathway; glycine from L-threonine: step 1/2. Functionally, catalyzes the NAD(+)-dependent oxidation of L-threonine to 2-amino-3-ketobutyrate. The sequence is that of L-threonine 3-dehydrogenase from Burkholderia multivorans (strain ATCC 17616 / 249).